The primary structure comprises 248 residues: PF03932 family protein CutC (248 aa).

Belongs to the CutC family. As to quaternary structure, homodimer.

It localises to the cytoplasm. The chain is PF03932 family protein CutC from Escherichia coli O17:K52:H18 (strain UMN026 / ExPEC).